The sequence spans 90 residues: Putative large ribosomal subunit protein uL23c (90 aa).

The interval 1–46 is coded by first part of gene; that stretch reads MDGIKYAVFTDKSIQLLGKKQYTSNVESRSTRTEIKHWVELWNSYE. Positions 47–90 are coded by second part of gene; that stretch reads MNSHRLPGKGRRMGPIMGHTMHYRRMIITLQSSYSIPPLRKKRT.

This sequence belongs to the universal ribosomal protein uL23 family. Part of the 50S ribosomal subunit.

The protein resides in the plastid. It localises to the chloroplast. Functionally, binds to 23S rRNA. In Spinacia oleracea (Spinach), this protein is Putative large ribosomal subunit protein uL23c (rpl23).